The following is a 394-amino-acid chain: Putative agmatinase 1 (394 aa).

The N-terminal stretch at 1-20 (MALQSLFLILLAGAAQLAQA) is a signal peptide. H186, D209, H211, D213, D307, and D309 together coordinate Mn(2+).

This sequence belongs to the arginase family. The cofactor is Mn(2+).

The enzyme catalyses agmatine + H2O = urea + putrescine. This chain is Putative agmatinase 1, found in Schizosaccharomyces pombe (strain 972 / ATCC 24843) (Fission yeast).